The chain runs to 35 residues: Kappa-theraphotoxin-Tb1b (35 aa).

Intrachain disulfides connect Cys3-Cys18, Cys10-Cys23, and Cys17-Cys30.

This sequence belongs to the neurotoxin 10 (Hwtx-1) family. 58 subfamily. In terms of assembly, monomer. In terms of tissue distribution, expressed by the venom gland.

Its subcellular location is the secreted. Low-affinity blocker of Kv4.2/KCND2 voltage-gated potassium channels. Is presumed to shift the voltage-dependence of channel activation to more depolarized potentials and to bind to the S3-S4 linker region of the voltage sensor domain. The protein is Kappa-theraphotoxin-Tb1b of Theraphosa blondi (Goliath birdeating spider).